The sequence spans 102 residues: Protein ORF28 (102 aa).

Residues 28–48 form a helical membrane-spanning segment; the sequence is VIGLITVLFLLVIGACVYCCI.

It localises to the host membrane. The sequence is that of Protein ORF28 (ORF28) from Homo sapiens (Human).